The chain runs to 590 residues: Zinc finger protein 703 (590 aa).

Residues 1-14 (MSDSPAGSNPRTPE) show a composition bias toward polar residues. Disordered regions lie at residues 1-43 (MSDS…DPLR), 96-293 (CSQI…AGHV), and 341-366 (LVGGQLSGGLGLPPGKPPSSSPLTGA). N-acetylserine is present on Ser-2. Low complexity-rich tracts occupy residues 27–37 (PAVPAAVSLLP), 128–139 (RSAPGAASAAAA), 171–189 (GSSSVSSTSSSSSSSPGDK), and 207–219 (APVSASSSSSSPG). Positions 241-251 (ELDKKDQEPKP) are enriched in basic and acidic residues. Phosphoserine is present on Ser-252. 2 stretches are compositionally biased toward gly residues: residues 260-273 (RGGGGEPGAHGGAE) and 341-352 (LVGGQLSGGLGL). Residues 456–484 (HSCNWVAASGPCDKRFATSEELLSHLRTH) form a C2H2-type zinc finger. The residue at position 580 (Arg-580) is an Omega-N-methylarginine.

Belongs to the Elbow/Noc family. Interacts with TLE4; increases transcriptional repression. Interacts with DCAF7 and PHB2. May interact with HSPD1. As to expression, expressed in mammary epithelium.

Its subcellular location is the nucleus. It localises to the cytoplasm. Functionally, transcriptional corepressor which does not bind directly to DNA and may regulate transcription through recruitment of histone deacetylases to gene promoters. Regulates cell adhesion, migration and proliferation. May be required for segmental gene expression during hindbrain development. The polypeptide is Zinc finger protein 703 (ZNF703) (Homo sapiens (Human)).